The following is a 481-amino-acid chain: NADH-quinone oxidoreductase subunit N (481 aa).

Transmembrane regions (helical) follow at residues 11–31 (AYPEIFLLLMVCVVMLADLFA), 37–57 (YLAFYLSLLTLAGCALVTCGI), 74–94 (AMSDILKLLIYVTVAAVLIYS), 103–123 (LLKGEFFSLALFATLGMMVMV), 128–148 (LITLYLGLELLSLSLYAMVAL), 162–182 (FFVLGALASGFLLYGMSMLYG), 205–225 (IFIIGLVFVVAGIGFKLSAVP), 238–258 (PTAVTLFIGSAPKFAAFGFVM), 272–292 (WQGMLVLLAVASMAVGNIAAI), 300–320 (MLAYSTISHMGFVLLGFIAAG), 328–348 (MFYVIAYVLMTLGAFGIIMLV), 371–391 (LAFMMLLVMFSMAGIPPMIGF), 405–425 (GYIWLVVVAVMLSLIGAFYYL), and 457–477 (LAIILLGMFPQMLMGLSLSAI).

Belongs to the complex I subunit 2 family. In terms of assembly, NDH-1 is composed of 14 different subunits. Subunits NuoA, H, J, K, L, M, N constitute the membrane sector of the complex.

It localises to the cell inner membrane. It catalyses the reaction a quinone + NADH + 5 H(+)(in) = a quinol + NAD(+) + 4 H(+)(out). Functionally, NDH-1 shuttles electrons from NADH, via FMN and iron-sulfur (Fe-S) centers, to quinones in the respiratory chain. The immediate electron acceptor for the enzyme in this species is believed to be ubiquinone. Couples the redox reaction to proton translocation (for every two electrons transferred, four hydrogen ions are translocated across the cytoplasmic membrane), and thus conserves the redox energy in a proton gradient. The chain is NADH-quinone oxidoreductase subunit N from Nitrosomonas europaea (strain ATCC 19718 / CIP 103999 / KCTC 2705 / NBRC 14298).